Here is a 165-residue protein sequence, read N- to C-terminus: Endoribonuclease YbeY (165 aa).

The Zn(2+) site is built by H126, H130, and H136.

This sequence belongs to the endoribonuclease YbeY family. Requires Zn(2+) as cofactor.

Its subcellular location is the cytoplasm. Functionally, single strand-specific metallo-endoribonuclease involved in late-stage 70S ribosome quality control and in maturation of the 3' terminus of the 16S rRNA. This is Endoribonuclease YbeY from Ruegeria pomeroyi (strain ATCC 700808 / DSM 15171 / DSS-3) (Silicibacter pomeroyi).